The following is a 369-amino-acid chain: Beta-1,4-galactosyltransferase 2 (369 aa).

At 1-15 the chain is on the cytoplasmic side; it reads MSRLLGGTLERVCKA. The helical; Signal-anchor for type II membrane protein transmembrane segment at 16–36 threads the bilayer; it reads VLLLCLLHFLVAVILYFDVYA. The Lumenal portion of the chain corresponds to 37 to 369; that stretch reads QHLAFFSRFS…GRPMSWLNQG (333 aa). Residues 59–75 show a composition bias toward polar residues; the sequence is SSSTNCSRPNATASSSG. The tract at residues 59 to 90 is disordered; sequence SSSTNCSRPNATASSSGLPEVPSARPGPTAPV. N63 and N68 each carry an N-linked (GlcNAc...) asparagine glycan. Cysteines 94 and 136 form a disulfide. Residues 147 to 151, 186 to 188, 214 to 215, and W275 each bind UDP-alpha-D-galactose; these read PFRHR, FNR, and VD. Cysteines 208 and 227 form a disulfide. D215 provides a ligand contact to Mn(2+). 277 to 280 is a binding site for N-acetyl-D-glucosamine; it reads GEDD. H308 serves as a coordination point for Mn(2+). 308-310 contacts UDP-alpha-D-galactose; that stretch reads HDR. An N-acetyl-D-glucosamine-binding site is contributed by R320. The N-linked (GlcNAc...) asparagine glycan is linked to N354.

This sequence belongs to the glycosyltransferase 7 family. Mn(2+) is required as a cofactor.

Its subcellular location is the golgi apparatus. It is found in the golgi stack membrane. The enzyme catalyses D-glucose + UDP-alpha-D-galactose = lactose + UDP + H(+). The catalysed reaction is an N-acetyl-beta-D-glucosaminyl derivative + UDP-alpha-D-galactose = a beta-D-galactosyl-(1-&gt;4)-N-acetyl-beta-D-glucosaminyl derivative + UDP + H(+). It carries out the reaction N-acetyl-D-glucosamine + UDP-alpha-D-galactose = beta-D-galactosyl-(1-&gt;4)-N-acetyl-D-glucosamine + UDP + H(+). It participates in protein modification; protein glycosylation. Functionally, responsible for the synthesis of complex-type N-linked oligosaccharides in many glycoproteins as well as the carbohydrate moieties of glycolipids. Can produce lactose. This is Beta-1,4-galactosyltransferase 2 (B4GALT2) from Cricetulus griseus (Chinese hamster).